A 33-amino-acid polypeptide reads, in one-letter code: Phosphoglycerate kinase (33 aa).

Lys-13 provides a ligand contact to AMP. Residue Lys-13 participates in ATP binding.

Belongs to the phosphoglycerate kinase family. As to quaternary structure, monomer. The cofactor is Mg(2+).

It catalyses the reaction (2R)-3-phosphoglycerate + ATP = (2R)-3-phospho-glyceroyl phosphate + ADP. The chain is Phosphoglycerate kinase from Pseudotsuga menziesii (Douglas-fir).